The following is a 347-amino-acid chain: Probable dual-specificity RNA methyltransferase RlmN (347 aa).

The Proton acceptor role is filled by E91. Residues Y97 to D327 form the Radical SAM core domain. Residues C104 and C332 are joined by a disulfide bond. Residues C111, C115, and C118 each coordinate [4Fe-4S] cluster. S-adenosyl-L-methionine contacts are provided by residues G158–E159, S190, S213–H215, and N289. Catalysis depends on C332, which acts as the S-methylcysteine intermediate.

This sequence belongs to the radical SAM superfamily. RlmN family. It depends on [4Fe-4S] cluster as a cofactor.

The protein resides in the cytoplasm. The enzyme catalyses adenosine(2503) in 23S rRNA + 2 reduced [2Fe-2S]-[ferredoxin] + 2 S-adenosyl-L-methionine = 2-methyladenosine(2503) in 23S rRNA + 5'-deoxyadenosine + L-methionine + 2 oxidized [2Fe-2S]-[ferredoxin] + S-adenosyl-L-homocysteine. It catalyses the reaction adenosine(37) in tRNA + 2 reduced [2Fe-2S]-[ferredoxin] + 2 S-adenosyl-L-methionine = 2-methyladenosine(37) in tRNA + 5'-deoxyadenosine + L-methionine + 2 oxidized [2Fe-2S]-[ferredoxin] + S-adenosyl-L-homocysteine. In terms of biological role, specifically methylates position 2 of adenine 2503 in 23S rRNA and position 2 of adenine 37 in tRNAs. The polypeptide is Probable dual-specificity RNA methyltransferase RlmN (Clostridium perfringens (strain 13 / Type A)).